Here is a 270-residue protein sequence, read N- to C-terminus: Probable septum site-determining protein MinC (270 aa).

The disordered stretch occupies residues 105-129; sequence DRRAPSSKAADEAPVQQAEPAAPAA. A compositionally biased stretch (low complexity) spans 116–129; it reads EAPVQQAEPAAPAA.

This sequence belongs to the MinC family. As to quaternary structure, interacts with MinD and FtsZ.

Its function is as follows. Cell division inhibitor that blocks the formation of polar Z ring septums. Rapidly oscillates between the poles of the cell to destabilize FtsZ filaments that have formed before they mature into polar Z rings. Prevents FtsZ polymerization. This Burkholderia mallei (strain NCTC 10247) protein is Probable septum site-determining protein MinC.